Reading from the N-terminus, the 134-residue chain is ATP synthase epsilon chain (134 aa).

Belongs to the ATPase epsilon chain family. F-type ATPases have 2 components, CF(1) - the catalytic core - and CF(0) - the membrane proton channel. CF(1) has five subunits: alpha(3), beta(3), gamma(1), delta(1), epsilon(1). CF(0) has three main subunits: a, b and c.

Its subcellular location is the cellular thylakoid membrane. Functionally, produces ATP from ADP in the presence of a proton gradient across the membrane. The chain is ATP synthase epsilon chain from Prochlorococcus marinus (strain MIT 9215).